The following is a 64-amino-acid chain: UPF0337 protein SH2043 (64 aa).

The tract at residues 1–64 (MAEDKFEQAK…DKVKGNNDNK (64 aa)) is disordered. Residues 22-64 (DNKDLEKEGQNDKASGKAKEAVENVKNKANDLIDKVKGNNDNK) show a composition bias toward basic and acidic residues.

This sequence belongs to the UPF0337 (CsbD) family.

This chain is UPF0337 protein SH2043, found in Staphylococcus haemolyticus (strain JCSC1435).